The primary structure comprises 34 residues: Photosystem II reaction center protein Psb30 (34 aa).

Residues 5 to 25 form a helical membrane-spanning segment; it reads VLAQLTVLAFVIAVGPITLIW.

The protein belongs to the Psb30/Ycf12 family. In terms of assembly, PSII is composed of 1 copy each of membrane proteins PsbA, PsbB, PsbC, PsbD, PsbE, PsbF, PsbH, PsbI, PsbJ, PsbK, PsbL, PsbM, PsbT, PsbX, PsbY, PsbZ, Psb30/Ycf12, peripheral proteins of the oxygen-evolving complex and a large number of cofactors. It forms dimeric complexes.

It localises to the plastid. It is found in the chloroplast thylakoid membrane. In terms of biological role, a core subunit of photosystem II (PSII), probably helps stabilize the reaction center. The chain is Photosystem II reaction center protein Psb30 from Cyanidioschyzon merolae (strain NIES-3377 / 10D) (Unicellular red alga).